A 340-amino-acid chain; its full sequence is Uroporphyrinogen decarboxylase (340 aa).

Residues 21–25 (RQAGR), Asp-71, Tyr-148, Ser-203, and His-316 each bind substrate.

Belongs to the uroporphyrinogen decarboxylase family. In terms of assembly, homodimer.

It localises to the cytoplasm. The catalysed reaction is uroporphyrinogen III + 4 H(+) = coproporphyrinogen III + 4 CO2. Its pathway is porphyrin-containing compound metabolism; protoporphyrin-IX biosynthesis; coproporphyrinogen-III from 5-aminolevulinate: step 4/4. In terms of biological role, catalyzes the decarboxylation of four acetate groups of uroporphyrinogen-III to yield coproporphyrinogen-III. The polypeptide is Uroporphyrinogen decarboxylase (Campylobacter concisus (strain 13826)).